A 104-amino-acid chain; its full sequence is Evasin P1174 (104 aa).

The N-terminal stretch at 1-27 is a signal peptide; the sequence is LKTFCLFLQIAVFIALGIQIFLCGTDA. Cystine bridges form between Cys40-Cys59, Cys44-Cys61, and Cys55-Cys72. Asn43, Asn49, and Asn58 each carry an N-linked (GlcNAc...) asparagine glycan. The segment at 85-104 is disordered; sequence KPTSEEIADASPRPKETNSH.

It localises to the secreted. Salivary chemokine-binding protein which binds to host chemokines CXCL1 and CXCL8. The protein is Evasin P1174 of Ixodes ricinus (Common tick).